A 416-amino-acid polypeptide reads, in one-letter code: Homogentisate 1,2-dioxygenase (416 aa).

The active-site Proton acceptor is the His275. Positions 318 and 324 each coordinate Fe cation. Homogentisate contacts are provided by Tyr333 and His354. His354 contributes to the Fe cation binding site.

It belongs to the homogentisate dioxygenase family. In terms of assembly, hexamer; dimer of trimers. Fe cation serves as cofactor.

It carries out the reaction homogentisate + O2 = 4-maleylacetoacetate + H(+). Its pathway is amino-acid degradation; L-phenylalanine degradation; acetoacetate and fumarate from L-phenylalanine: step 4/6. Functionally, involved in the catabolism of homogentisate (2,5-dihydroxyphenylacetate or 2,5-OH-PhAc), a central intermediate in the degradation of phenylalanine and tyrosine. Catalyzes the oxidative ring cleavage of the aromatic ring of homogentisate to yield maleylacetoacetate. The polypeptide is Homogentisate 1,2-dioxygenase (Legionella pneumophila (strain Lens)).